The primary structure comprises 421 residues: Serine hydroxymethyltransferase (421 aa).

(6S)-5,6,7,8-tetrahydrofolate is bound by residues Leu123 and 127 to 129 (GHL). At Lys232 the chain carries N6-(pyridoxal phosphate)lysine.

It belongs to the SHMT family. Homodimer. The cofactor is pyridoxal 5'-phosphate.

Its subcellular location is the cytoplasm. The enzyme catalyses (6R)-5,10-methylene-5,6,7,8-tetrahydrofolate + glycine + H2O = (6S)-5,6,7,8-tetrahydrofolate + L-serine. It functions in the pathway one-carbon metabolism; tetrahydrofolate interconversion. The protein operates within amino-acid biosynthesis; glycine biosynthesis; glycine from L-serine: step 1/1. Its function is as follows. Catalyzes the reversible interconversion of serine and glycine with tetrahydrofolate (THF) serving as the one-carbon carrier. This reaction serves as the major source of one-carbon groups required for the biosynthesis of purines, thymidylate, methionine, and other important biomolecules. Also exhibits THF-independent aldolase activity toward beta-hydroxyamino acids, producing glycine and aldehydes, via a retro-aldol mechanism. This chain is Serine hydroxymethyltransferase, found in Ehrlichia canis (strain Jake).